A 247-amino-acid chain; its full sequence is Ribosomal RNA small subunit methyltransferase J (247 aa).

S-adenosyl-L-methionine-binding positions include 106-107 (RD), 122-123 (ER), and aspartate 168.

The protein belongs to the methyltransferase superfamily. RsmJ family.

Its subcellular location is the cytoplasm. The enzyme catalyses guanosine(1516) in 16S rRNA + S-adenosyl-L-methionine = N(2)-methylguanosine(1516) in 16S rRNA + S-adenosyl-L-homocysteine + H(+). Specifically methylates the guanosine in position 1516 of 16S rRNA. The protein is Ribosomal RNA small subunit methyltransferase J of Alcanivorax borkumensis (strain ATCC 700651 / DSM 11573 / NCIMB 13689 / SK2).